The following is a 539-amino-acid chain: T-complex protein 1 subunit zeta (539 aa).

This sequence belongs to the TCP-1 chaperonin family. In terms of assembly, heterooligomeric complex of about 850 to 900 kDa that forms two stacked rings, 12 to 16 nm in diameter.

It is found in the cytoplasm. Functionally, molecular chaperone; assists the folding of proteins upon ATP hydrolysis. Known to play a role, in vitro, in the folding of actin and tubulin. The chain is T-complex protein 1 subunit zeta (cct-6) from Caenorhabditis elegans.